The following is a 314-amino-acid chain: tRNA dimethylallyltransferase (314 aa).

15–22 (GPTATGKS) lines the ATP pocket. Substrate is bound at residue 17–22 (TATGKS). The tract at residues 40 to 43 (DSML) is interaction with substrate tRNA.

It belongs to the IPP transferase family. In terms of assembly, monomer. Mg(2+) is required as a cofactor.

It carries out the reaction adenosine(37) in tRNA + dimethylallyl diphosphate = N(6)-dimethylallyladenosine(37) in tRNA + diphosphate. Its function is as follows. Catalyzes the transfer of a dimethylallyl group onto the adenine at position 37 in tRNAs that read codons beginning with uridine, leading to the formation of N6-(dimethylallyl)adenosine (i(6)A). The polypeptide is tRNA dimethylallyltransferase (Pelotomaculum thermopropionicum (strain DSM 13744 / JCM 10971 / SI)).